The primary structure comprises 463 residues: Gamma-aminobutyric acid receptor subunit alpha-5 (463 aa).

Positions Met1–Ser25 are cleaved as a signal peptide. The Extracellular portion of the chain corresponds to Ser26 to Phe260. N-linked (GlcNAc...) asparagine glycosylation is present at Asn45. Arg101 is a binding site for 4-aminobutanoate. N-linked (GlcNAc...) asparagine glycosylation is present at Asn145. Thr164 serves as a coordination point for 4-aminobutanoate. The cysteines at positions 173 and 187 are disulfide-linked. Residues Asn207 and Asn236 are each glycosylated (N-linked (GlcNAc...) asparagine). Transmembrane regions (helical) follow at residues Val261–Leu281, Pro287–Arg308, and Ala319–Thr340. Over Val341 to Lys428 the chain is Cytoplasmic. Residue Lys355 forms a Glycyl lysine isopeptide (Lys-Gly) (interchain with G-Cter in ubiquitin) linkage. The tract at residues Pro387 to Ala408 is disordered. A helical membrane pass occupies residues Met429–Tyr449.

Belongs to the ligand-gated ion channel (TC 1.A.9) family. Gamma-aminobutyric acid receptor (TC 1.A.9.5) subfamily. GABRA5 sub-subfamily. As to quaternary structure, heteropentamer, formed by a combination of alpha (GABRA1-6), beta (GABRB1-3), gamma (GABRG1-3), delta (GABRD), epsilon (GABRE), rho (GABRR1-3), pi (GABRP) and theta (GABRQ) chains, each subunit exhibiting distinct physiological and pharmacological properties. As to expression, expressed in brain, in hippocampal pyramidal neurons.

It localises to the postsynaptic cell membrane. The protein localises to the cell membrane. It catalyses the reaction chloride(in) = chloride(out). Functionally, alpha subunit of the heteropentameric ligand-gated chloride channel gated by gamma-aminobutyric acid (GABA), a major inhibitory neurotransmitter in the brain. GABA-gated chloride channels, also named GABA(A) receptors (GABAAR), consist of five subunits arranged around a central pore and contain GABA active binding site(s) located at the alpha and beta subunit interface(s). When activated by GABA, GABAARs selectively allow the flow of chloride anions across the cell membrane down their electrochemical gradient. GABAARs containing alpha-5/GABRA5 are mainly extrasynaptic and contribute to the tonic GABAergic inhibition of the hippocampus. Extrasynaptic alpha-5-containing GABAARs in CA1 pyramidal neurons play a role in learning and memory processes. This is Gamma-aminobutyric acid receptor subunit alpha-5 from Mus musculus (Mouse).